Here is an 83-residue protein sequence, read N- to C-terminus: DNA-directed RNA polymerase subunit Rpo5 (83 aa).

This sequence belongs to the archaeal Rpo5/eukaryotic RPB5 RNA polymerase subunit family. In terms of assembly, part of the RNA polymerase complex.

The protein resides in the cytoplasm. It carries out the reaction RNA(n) + a ribonucleoside 5'-triphosphate = RNA(n+1) + diphosphate. In terms of biological role, DNA-dependent RNA polymerase (RNAP) catalyzes the transcription of DNA into RNA using the four ribonucleoside triphosphates as substrates. The sequence is that of DNA-directed RNA polymerase subunit Rpo5 from Metallosphaera sedula (strain ATCC 51363 / DSM 5348 / JCM 9185 / NBRC 15509 / TH2).